A 380-amino-acid chain; its full sequence is Cytochrome b (380 aa).

Transmembrane regions (helical) follow at residues 33-53, 77-98, 113-133, and 178-198; these read FGSL…FLAM, WLIR…YLHI, WTIG…GYVL, and FFAF…IHLL. Heme b contacts are provided by His-83 and His-97. Positions 182 and 196 each coordinate heme b. His-201 provides a ligand contact to a ubiquinone. 4 helical membrane-spanning segments follow: residues 226-246, 288-308, 320-340, and 347-367; these read YKDL…ALFS, LGGV…PFLH, VTQF…WIGG, and FVII…VLIP.

The protein belongs to the cytochrome b family. As to quaternary structure, the cytochrome bc1 complex contains 3 respiratory subunits (MT-CYB, CYC1 and UQCRFS1), 2 core proteins (UQCRC1 and UQCRC2) and probably 6 low-molecular weight proteins. Requires heme b as cofactor.

The protein resides in the mitochondrion inner membrane. Functionally, component of the ubiquinol-cytochrome c reductase complex (complex III or cytochrome b-c1 complex) that is part of the mitochondrial respiratory chain. The b-c1 complex mediates electron transfer from ubiquinol to cytochrome c. Contributes to the generation of a proton gradient across the mitochondrial membrane that is then used for ATP synthesis. In Kareius bicoloratus (Stone flounder), this protein is Cytochrome b (mt-cyb).